We begin with the raw amino-acid sequence, 658 residues long: Translation factor GUF1, mitochondrial (658 aa).

Residues 1–40 (MRGCLQTVRWLTSAWQRPPSYPPLSRAAPCRFFNVSIPRN) constitute a mitochondrion transit peptide. The region spanning 60–240 (DRFRNFCIVA…TVVEQIPAPV (181 aa)) is the tr-type G domain. Residues 69–76 (AHVDHGKS), 133–137 (DTPGH), and 187–190 (NKVD) contribute to the GTP site.

The protein belongs to the TRAFAC class translation factor GTPase superfamily. Classic translation factor GTPase family. LepA subfamily.

The protein localises to the mitochondrion inner membrane. It catalyses the reaction GTP + H2O = GDP + phosphate + H(+). Promotes mitochondrial protein synthesis. May act as a fidelity factor of the translation reaction, by catalyzing a one-codon backward translocation of tRNAs on improperly translocated ribosomes. Binds to mitochondrial ribosomes in a GTP-dependent manner. The sequence is that of Translation factor GUF1, mitochondrial from Paracoccidioides brasiliensis (strain Pb03).